We begin with the raw amino-acid sequence, 1320 residues long: Immunoglobulin superfamily member 1 (1320 aa).

The signal sequence occupies residues 1-18; that stretch reads MMLRTFTLLLLCIWLNRG. Residues 19-504 are Extracellular-facing; sequence MTSMAAVESQ…LPWNSILNEA (486 aa). Ig-like C2-type domains are found at residues 29-113, 115-212, 224-308, 312-399, and 401-482; these read PELW…KILE, EAPG…KLVV, HPGP…IWVT, PKTW…ATYN, and VELI…HRSE. N-linked (GlcNAc...) asparagine glycosylation is present at asparagine 44. A disulfide bridge connects residues cysteine 49 and cysteine 97. N-linked (GlcNAc...) asparagine glycans are attached at residues asparagine 329, asparagine 365, and asparagine 372. 2 cysteine pairs are disulfide-bonded: cysteine 334–cysteine 383 and cysteine 423–cysteine 466. A helical transmembrane segment spans residues 505–525; that stretch reads IRVSLTVQFLSLLLLVLWLQW. The Cytoplasmic portion of the chain corresponds to 526-534; that stretch reads KCRRLRLRE. A helical transmembrane segment spans residues 535–555; the sequence is AWLLGTAQGVAMLVILIALLC. At 556 to 1320 the chain is on the extracellular side; sequence CGLCNGALTE…GVSVEQTVPI (765 aa). Ig-like C2-type domains lie at 572 to 665, 662 to 756, 761 to 853, 857 to 942, 949 to 1044, 1049 to 1134, and 1145 to 1226; these read PTPK…VGTD, VGTD…ELVI, PKPF…LIVT, PKPT…YLST, TDTF…ELIV, PKPS…NHSN, and PKPS…EPSD. N-linked (GlcNAc...) asparagine glycosylation is found at asparagine 591, asparagine 731, asparagine 782, asparagine 830, asparagine 874, asparagine 923, asparagine 970, asparagine 1011, and asparagine 1066. An intrachain disulfide couples cysteine 783 to cysteine 833. Residues cysteine 879 and cysteine 926 are joined by a disulfide bond. The cysteines at positions 1071 and 1118 are disulfide-linked. 2 N-linked (GlcNAc...) asparagine glycosylation sites follow: asparagine 1131 and asparagine 1207. Cysteine 1167 and cysteine 1210 are joined by a disulfide.

Interacts with INHA; the interaction is not confirmed by standard receptor binding assays. Interacts with ACVR1B; the interaction appears to be ligand-dependent as it is diminished by inhibin B and activin A. Interacts with ACVR2A, ACVR2B, ACVRL1 and BMPR1B. Interacts with HECTD1. In terms of tissue distribution, expressed in pituitary gland, testis and liver. Isoform 2 is expressed pituitary gland and testis.

It is found in the membrane. The protein resides in the secreted. Its function is as follows. Seems to be a coreceptor in inhibin signaling, but seems not to be a high-affinity inhibin receptor. Antagonizes activin A signaling in the presence or absence of inhibin B. Necessary to mediate a specific antagonistic effect of inhibin B on activin-stimulated transcription. This is Immunoglobulin superfamily member 1 (Igsf1) from Rattus norvegicus (Rat).